A 222-amino-acid chain; its full sequence is 2-amino-5-formylamino-6-ribosylaminopyrimidin-4(3H)-one 5'-monophosphate deformylase (222 aa).

Fe cation-binding residues include Glu-29, His-31, Asp-40, and His-108.

It belongs to the creatininase superfamily. FAPy deformylase family. As to quaternary structure, homodimer. Requires Fe(2+) as cofactor. It depends on Zn(2+) as a cofactor.

The catalysed reaction is 2-amino-5-formylamino-6-(5-phospho-D-ribosylamino)pyrimidin-4(3H)-one + H2O = 2,5-diamino-6-(1-D-ribosylamino)pyrimidin-4(3H)-one 5'-phosphate + formate + H(+). Its pathway is cofactor biosynthesis; coenzyme F420 biosynthesis. The protein operates within cofactor biosynthesis; riboflavin biosynthesis. Catalyzes the hydrolysis of the formamide of 2-amino-5-formylamino-6-ribosylamino-4(3H)-pyrimidinone 5'-monophosphate (FAPy) to form 2,5-diamino-6-ribosylamino-4(3H)-pyrimidinone 5'-phosphate (APy). This is 2-amino-5-formylamino-6-ribosylaminopyrimidin-4(3H)-one 5'-monophosphate deformylase from Methanocaldococcus infernus (strain DSM 11812 / JCM 15783 / ME).